The chain runs to 785 residues: Endonuclease MutS2 (785 aa).

332-339 lines the ATP pocket; sequence GPNTGGKT. Residues 710 to 785 form the Smr domain; that stretch reads IDLRGLDAEE…GDGATIVELK (76 aa).

The protein belongs to the DNA mismatch repair MutS family. MutS2 subfamily. As to quaternary structure, homodimer. Binds to stalled ribosomes, contacting rRNA.

Its function is as follows. Endonuclease that is involved in the suppression of homologous recombination and thus may have a key role in the control of bacterial genetic diversity. Functionally, acts as a ribosome collision sensor, splitting the ribosome into its 2 subunits. Detects stalled/collided 70S ribosomes which it binds and splits by an ATP-hydrolysis driven conformational change. Acts upstream of the ribosome quality control system (RQC), a ribosome-associated complex that mediates the extraction of incompletely synthesized nascent chains from stalled ribosomes and their subsequent degradation. Probably generates substrates for RQC. This Clostridium botulinum (strain Alaska E43 / Type E3) protein is Endonuclease MutS2.